We begin with the raw amino-acid sequence, 430 residues long: Adenylosuccinate synthetase (430 aa).

GTP contacts are provided by residues 12-18 (GDEGKGK) and 40-42 (GHT). The active-site Proton acceptor is Asp-13. Mg(2+) is bound by residues Asp-13 and Gly-40. IMP-binding positions include 13-16 (DEGK), 38-41 (NAGH), Thr-128, Arg-142, Gln-223, Thr-238, and Arg-302. The active-site Proton donor is the His-41. Substrate is bound at residue 298 to 304 (TTTGRPR). Residues Arg-304, 330 to 332 (SID), and 412 to 414 (SVG) contribute to the GTP site.

Belongs to the adenylosuccinate synthetase family. Homodimer. Mg(2+) serves as cofactor.

Its subcellular location is the cytoplasm. It carries out the reaction IMP + L-aspartate + GTP = N(6)-(1,2-dicarboxyethyl)-AMP + GDP + phosphate + 2 H(+). The protein operates within purine metabolism; AMP biosynthesis via de novo pathway; AMP from IMP: step 1/2. Plays an important role in the de novo pathway of purine nucleotide biosynthesis. Catalyzes the first committed step in the biosynthesis of AMP from IMP. The protein is Adenylosuccinate synthetase of Streptococcus agalactiae serotype Ia (strain ATCC 27591 / A909 / CDC SS700).